Consider the following 350-residue polypeptide: Secreted effector protein PipB2 (350 aa).

Pentapeptide repeat domains are found at residues Ala-162–Gly-201, Thr-202–Gly-241, Cys-247–Asp-286, and Ala-287–His-326.

In terms of assembly, interacts with the host kinesin light chain (KLC), a subunit of the kinesin-1 motor complex.

It is found in the secreted. The protein resides in the host membrane. Effector proteins function to alter host cell physiology and promote bacterial survival in host tissues. Involved in the reorganization of late endosome/lysosome (LE/Lys) compartments in mammalian cells. Necessary and sufficient to link kinesin-1 onto the Salmonella-containing vacuole (SCV) membrane. Required for centrifugal extension of lysosomal glycoprotein-rich membrane tubules, known as Salmonella-induced filaments (Sifs), away from the SCV and toward the cell periphery. Required for virulence, but not for intracellular survival and replication in phagocytic cells. The sequence is that of Secreted effector protein PipB2 (pipB2) from Salmonella choleraesuis (strain SC-B67).